A 186-amino-acid chain; its full sequence is Elongation factor P (186 aa).

The protein belongs to the elongation factor P family.

The protein localises to the cytoplasm. It functions in the pathway protein biosynthesis; polypeptide chain elongation. Its function is as follows. Involved in peptide bond synthesis. Stimulates efficient translation and peptide-bond synthesis on native or reconstituted 70S ribosomes in vitro. Probably functions indirectly by altering the affinity of the ribosome for aminoacyl-tRNA, thus increasing their reactivity as acceptors for peptidyl transferase. The sequence is that of Elongation factor P from Synechococcus sp. (strain RCC307).